The sequence spans 529 residues: Beta-hexosaminidase subunit alpha (529 aa).

An N-terminal signal peptide occupies residues 1–22 (MTSSRLWFSLLLAAAFAGRATA). A propeptide spanning residues 23–88 (LWPWPQNFQT…PRPYLTGKRH (66 aa)) is cleaved from the precursor. C58 and C104 are joined by a disulfide. N115, N157, and N295 each carry an N-linked (GlcNAc...) asparagine glycan. A disulfide bond links C277 and C328. The Proton donor role is filled by E323. A critical for hydrolysis GM2 gangliosides region spans residues 423–424 (NR). A disulfide bridge links C505 with C522.

It belongs to the glycosyl hydrolase 20 family. There are 3 beta-hexosaminidase isozymes: isozyme A (hexosaminidase A) is a heterodimer composed of one subunit alpha and one subunit beta (chain A and B); isozyme B (hexosaminidase B) is a homodimer of two beta subunits (two chains A and B); isozyme S (hexosaminidase S) is a homodimer of two alpha subunits. The composition of the dimer (isozyme A versus isozyme S) has a significant effect on the substrate specificity of the alpha subunit active site. Post-translationally, N-linked glycan at Asn-115 consists of Man(3)-GlcNAc(2). N-linked glycan at Asn-157 consists of either GlcNAc or GlcNAc(2)-Man(7-9). N-linked glycan at Asn-295 consists of either GlcNAc, GlcNAc-Fuc, or GlcNAc(2)-Man(4).

It localises to the lysosome. The enzyme catalyses Hydrolysis of terminal non-reducing N-acetyl-D-hexosamine residues in N-acetyl-beta-D-hexosaminides.. It catalyses the reaction N-acetyl-beta-D-galactosaminyl-(1-&gt;4)-beta-D-3-sulfogalactosyl-(1-&gt;4)-beta-D-glucosyl-(1&lt;-&gt;1')-ceramide + H2O = a beta-D-3-sulfogalactosyl-(1-&gt;4)-beta-D-glucosyl-(1&lt;-&gt;1')-ceramide + N-acetyl-beta-D-galactosamine. The catalysed reaction is a ganglioside GM2 (d18:1(4E)) + H2O = a ganglioside GM3 (d18:1(4E)) + N-acetyl-beta-D-galactosamine. It carries out the reaction a ganglioside GM2 + H2O = a ganglioside GM3 + N-acetyl-beta-D-galactosamine. The enzyme catalyses beta-D-GalNAc-(1-&gt;4)-alpha-L-IdoA-(1-&gt;3)-beta-D-GalNAc-4-sulfate-(1-&gt;4)-alpha-L-IdoA-(1-&gt;3)-D-GalNAc-4-sulfate + H2O = alpha-L-IdoA-(1-&gt;3)-beta-D-GalNAc-4-sulfate-(1-&gt;4)-alpha-L-IdoA-(1-&gt;3)-D-GalNAc-4-sulfate + N-acetyl-D-galactosamine. It catalyses the reaction N-acetyl-beta-D-6-sulfogalactosaminyl-(1-&gt;4)-alpha-L-iduronyl-(1-&gt;3)-N-acetyl-D-6-sulfogalactosamine + H2O = alpha-L-iduronyl-(1-&gt;3)-N-acetyl-D-6-sulfogalactosamine + N-acetyl-D-6-sulfogalactosamine. Addition of GM2A stimulates the hydrolysis of sulfated glycosphingolipid SM2 and the ganglioside GM2. Functionally, hydrolyzes the non-reducing end N-acetyl-D-hexosamine and/or sulfated N-acetyl-D-hexosamine of glycoconjugates, such as the oligosaccharide moieties from proteins and neutral glycolipids, or from certain mucopolysaccharides. The isozyme S is as active as the isozyme A on the anionic bis-sulfated glycans, the chondroitin-6-sulfate trisaccharide (C6S-3), and the dermatan sulfate pentasaccharide, and the sulfated glycosphingolipid SM2. The isozyme B does not hydrolyze each of these substrates, however hydrolyzes efficiently neutral oligosaccharide. Only the isozyme A is responsible for the degradation of GM2 gangliosides in the presence of GM2A. The chain is Beta-hexosaminidase subunit alpha from Homo sapiens (Human).